The sequence spans 270 residues: Putative phosphoenolpyruvate synthase regulatory protein (270 aa).

150 to 157 contacts ADP; sequence GVSRCGKT.

This sequence belongs to the pyruvate, phosphate/water dikinase regulatory protein family. PSRP subfamily.

It carries out the reaction [pyruvate, water dikinase] + ADP = [pyruvate, water dikinase]-phosphate + AMP + H(+). It catalyses the reaction [pyruvate, water dikinase]-phosphate + phosphate + H(+) = [pyruvate, water dikinase] + diphosphate. Its function is as follows. Bifunctional serine/threonine kinase and phosphorylase involved in the regulation of the phosphoenolpyruvate synthase (PEPS) by catalyzing its phosphorylation/dephosphorylation. This is Putative phosphoenolpyruvate synthase regulatory protein from Shewanella loihica (strain ATCC BAA-1088 / PV-4).